The primary structure comprises 209 residues: Inorganic pyrophosphatase (209 aa).

Residues lysine 38, arginine 52, and tyrosine 64 each contribute to the substrate site. Residues aspartate 92, aspartate 97, and aspartate 130 each coordinate Mg(2+). Tyrosine 167 serves as a coordination point for substrate.

Belongs to the PPase family. As to quaternary structure, homohexamer. The cofactor is Mg(2+).

Its subcellular location is the cytoplasm. The enzyme catalyses diphosphate + H2O = 2 phosphate + H(+). Functionally, catalyzes the hydrolysis of inorganic pyrophosphate (PPi) forming two phosphate ions. In Chlamydia muridarum (strain MoPn / Nigg), this protein is Inorganic pyrophosphatase.